The following is a 268-amino-acid chain: Mediator of RNA polymerase II transcription subunit 18 (268 aa).

The protein belongs to the Mediator complex subunit 18 family. In terms of assembly, component of the Mediator complex.

Its subcellular location is the nucleus. Component of the Mediator complex, a coactivator involved in the regulated transcription of nearly all RNA polymerase II-dependent genes. Mediator functions as a bridge to convey information from gene-specific regulatory proteins to the basal RNA polymerase II transcription machinery. Mediator is recruited to promoters by direct interactions with regulatory proteins and serves as a scaffold for the assembly of a functional preinitiation complex with RNA polymerase II and the general transcription factors. This is Mediator of RNA polymerase II transcription subunit 18 (srb5) from Neosartorya fischeri (strain ATCC 1020 / DSM 3700 / CBS 544.65 / FGSC A1164 / JCM 1740 / NRRL 181 / WB 181) (Aspergillus fischerianus).